Reading from the N-terminus, the 166-residue chain is Urease accessory protein UreE 2 (166 aa).

The disordered stretch occupies residues 133-156 (QPEHGAYGGGHHHSRAGEEDFNYP).

Belongs to the UreE family.

It is found in the cytoplasm. Involved in urease metallocenter assembly. Binds nickel. Probably functions as a nickel donor during metallocenter assembly. In Pseudomonas syringae pv. tomato (strain ATCC BAA-871 / DC3000), this protein is Urease accessory protein UreE 2.